Consider the following 198-residue polypeptide: dITP/XTP pyrophosphatase (198 aa).

7-12 (THNPHK) is a substrate binding site. Positions 40 and 69 each coordinate Mg(2+). The active-site Proton acceptor is Asp69. Substrate is bound by residues Thr70, 151-154 (FGYD), Lys174, and 179-180 (HR).

The protein belongs to the HAM1 NTPase family. Homodimer. Mg(2+) is required as a cofactor.

The enzyme catalyses XTP + H2O = XMP + diphosphate + H(+). The catalysed reaction is dITP + H2O = dIMP + diphosphate + H(+). It carries out the reaction ITP + H2O = IMP + diphosphate + H(+). Functionally, pyrophosphatase that catalyzes the hydrolysis of nucleoside triphosphates to their monophosphate derivatives, with a high preference for the non-canonical purine nucleotides XTP (xanthosine triphosphate), dITP (deoxyinosine triphosphate) and ITP. Seems to function as a house-cleaning enzyme that removes non-canonical purine nucleotides from the nucleotide pool, thus preventing their incorporation into DNA/RNA and avoiding chromosomal lesions. The protein is dITP/XTP pyrophosphatase of Thermoanaerobacter sp. (strain X514).